The sequence spans 397 residues: Succinyl-diaminopimelate desuccinylase (397 aa).

Zn(2+) is bound at residue His-73. Residue Asp-75 is part of the active site. Residue Asp-106 participates in Zn(2+) binding. Glu-140 serves as the catalytic Proton acceptor. Zn(2+)-binding residues include Glu-141, Glu-169, and His-366.

Belongs to the peptidase M20A family. DapE subfamily. In terms of assembly, homodimer. Zn(2+) serves as cofactor. The cofactor is Co(2+).

The enzyme catalyses N-succinyl-(2S,6S)-2,6-diaminopimelate + H2O = (2S,6S)-2,6-diaminopimelate + succinate. It participates in amino-acid biosynthesis; L-lysine biosynthesis via DAP pathway; LL-2,6-diaminopimelate from (S)-tetrahydrodipicolinate (succinylase route): step 3/3. In terms of biological role, catalyzes the hydrolysis of N-succinyl-L,L-diaminopimelic acid (SDAP), forming succinate and LL-2,6-diaminopimelate (DAP), an intermediate involved in the bacterial biosynthesis of lysine and meso-diaminopimelic acid, an essential component of bacterial cell walls. The sequence is that of Succinyl-diaminopimelate desuccinylase from Rhizobium meliloti (strain 1021) (Ensifer meliloti).